The following is a 356-amino-acid chain: tRNA N6-adenosine threonylcarbamoyltransferase (356 aa).

The Fe cation site is built by His115 and His119. Residues 138-142, Asp171, Gly184, and Asn283 each bind substrate; that span reads LVSGG. Residue Asp311 coordinates Fe cation.

Belongs to the KAE1 / TsaD family. It depends on Fe(2+) as a cofactor.

Its subcellular location is the cytoplasm. It catalyses the reaction L-threonylcarbamoyladenylate + adenosine(37) in tRNA = N(6)-L-threonylcarbamoyladenosine(37) in tRNA + AMP + H(+). Functionally, required for the formation of a threonylcarbamoyl group on adenosine at position 37 (t(6)A37) in tRNAs that read codons beginning with adenine. Is involved in the transfer of the threonylcarbamoyl moiety of threonylcarbamoyl-AMP (TC-AMP) to the N6 group of A37, together with TsaE and TsaB. TsaD likely plays a direct catalytic role in this reaction. The polypeptide is tRNA N6-adenosine threonylcarbamoyltransferase (Prochlorococcus marinus subsp. pastoris (strain CCMP1986 / NIES-2087 / MED4)).